The primary structure comprises 186 residues: UPF0340 protein SEQ_1951 (186 aa).

This sequence belongs to the UPF0340 family.

This chain is UPF0340 protein SEQ_1951, found in Streptococcus equi subsp. equi (strain 4047).